A 665-amino-acid polypeptide reads, in one-letter code: Cyclic nucleotide-gated cation channel subunit A (665 aa).

At 1 to 110 the chain is on the cytoplasmic side; it reads MRHFKVKAMV…DPTLQSHYRW (110 aa). A helical transmembrane segment spans residues 111 to 131; it reads LAIVSLAVLYNIIFVVGRAVF. The Extracellular portion of the chain corresponds to 132–138; the sequence is WEINKSA. N-linked (GlcNAc...) asparagine glycosylation is present at asparagine 135. The helical transmembrane segment at 139–159 threads the bilayer; sequence PAFWYTLDYLCDFIYLLDTLV. Residues 160–186 lie on the Cytoplasmic side of the membrane; the sequence is HMHEGFLDQGLLVRDAFRLRRHYFHTK. A helical transmembrane segment spans residues 187–207; sequence GWYLDVLSMLPTDLAYIWWPP. Over 208–253 the chain is Extracellular; sequence ETCSSLYLPCPVIVRLNRLLRINRLWEWFDRTETATGYPNAFRICK. The chain crosses the membrane as a helical span at residues 254-274; that stretch reads VVLAILVLIHWNACMYFAISY. The Cytoplasmic portion of the chain corresponds to 275-325; it reads EIGFSSDSWVYNLNGTRNNTLQRQYIYSFYWSTLTLTTIGETPTPENDVEY. A helical membrane pass occupies residues 326–346; that stretch reads LFVVADFLAGVLIFATIVGNI. Topologically, residues 347-481 are extracellular; that stretch reads GSMISNMNVA…GKLSVVGDDG (135 aa). 3',5'-cyclic GMP contacts are provided by residues 437–559, glutamate 496, and arginine 511; that span reads LLEA…DGLL. Residues 482–502 form a helical membrane-spanning segment; sequence ITVLATLGAGSVFGEVSVLEI. Residues 503 to 665 are Cytoplasmic-facing; that stretch reads AGNRTGNRRT…SSDAAKQNTL (163 aa). The disordered stretch occupies residues 633–665; sequence RSGRLYSLQPKRRPRSRPDATAKSSDAAKQNTL. Over residues 654–665 the composition is skewed to polar residues; the sequence is AKSSDAAKQNTL.

This sequence belongs to the cyclic nucleotide-gated cation channel (TC 1.A.1.5) family. As to expression, expressed in antennae and the visual system.

It is found in the membrane. In terms of biological role, approximately 50-fold more sensitive to cGMP than to cAMP. May be involved in transduction cascades of both invertebrate photoreceptors and olfactory sensillae. The protein is Cyclic nucleotide-gated cation channel subunit A (CngA) of Drosophila melanogaster (Fruit fly).